We begin with the raw amino-acid sequence, 87 residues long: Translation initiation factor IF-1 2 (87 aa).

Residues 1–72 (MAKEELLELD…TKGRINFRHK (72 aa)) enclose the S1-like domain.

This sequence belongs to the IF-1 family. In terms of assembly, component of the 30S ribosomal translation pre-initiation complex which assembles on the 30S ribosome in the order IF-2 and IF-3, IF-1 and N-formylmethionyl-tRNA(fMet); mRNA recruitment can occur at any time during PIC assembly.

The protein resides in the cytoplasm. One of the essential components for the initiation of protein synthesis. Stabilizes the binding of IF-2 and IF-3 on the 30S subunit to which N-formylmethionyl-tRNA(fMet) subsequently binds. Helps modulate mRNA selection, yielding the 30S pre-initiation complex (PIC). Upon addition of the 50S ribosomal subunit IF-1, IF-2 and IF-3 are released leaving the mature 70S translation initiation complex. The polypeptide is Translation initiation factor IF-1 2 (Burkholderia ambifaria (strain ATCC BAA-244 / DSM 16087 / CCUG 44356 / LMG 19182 / AMMD) (Burkholderia cepacia (strain AMMD))).